The chain runs to 485 residues: Glutamyl-tRNA(Gln) amidotransferase subunit A (485 aa).

Catalysis depends on charge relay system residues lysine 74 and serine 149. Serine 173 (acyl-ester intermediate) is an active-site residue.

The protein belongs to the amidase family. GatA subfamily. Heterotrimer of A, B and C subunits.

It carries out the reaction L-glutamyl-tRNA(Gln) + L-glutamine + ATP + H2O = L-glutaminyl-tRNA(Gln) + L-glutamate + ADP + phosphate + H(+). Allows the formation of correctly charged Gln-tRNA(Gln) through the transamidation of misacylated Glu-tRNA(Gln) in organisms which lack glutaminyl-tRNA synthetase. The reaction takes place in the presence of glutamine and ATP through an activated gamma-phospho-Glu-tRNA(Gln). This Synechococcus sp. (strain RCC307) protein is Glutamyl-tRNA(Gln) amidotransferase subunit A.